We begin with the raw amino-acid sequence, 390 residues long: Lipid-A-disaccharide synthase (390 aa).

Belongs to the LpxB family.

The catalysed reaction is a lipid X + a UDP-2-N,3-O-bis[(3R)-3-hydroxyacyl]-alpha-D-glucosamine = a lipid A disaccharide + UDP + H(+). It functions in the pathway bacterial outer membrane biogenesis; LPS lipid A biosynthesis. In terms of biological role, condensation of UDP-2,3-diacylglucosamine and 2,3-diacylglucosamine-1-phosphate to form lipid A disaccharide, a precursor of lipid A, a phosphorylated glycolipid that anchors the lipopolysaccharide to the outer membrane of the cell. This is Lipid-A-disaccharide synthase from Haemophilus influenzae (strain PittGG).